A 1203-amino-acid chain; its full sequence is Zinc finger and BTB domain-containing protein 38 (1203 aa).

The BTB domain occupies 33-100 (CDVTIIVEDT…IYSSTVVVRR (68 aa)). A Glycyl lysine isopeptide (Lys-Gly) (interchain with G-Cter in SUMO2) cross-link involves residue Lys-43. A Phosphoserine modification is found at Ser-130. Glycyl lysine isopeptide (Lys-Gly) (interchain with G-Cter in SUMO2) cross-links involve residues Lys-145, Lys-148, Lys-151, and Lys-260. The interval 230–334 (EAYRSQPLRE…PSETPGPPAA (105 aa)) is disordered. Residues 269–280 (TQTQDSDSTTEN) show a composition bias toward polar residues. The tract at residues 299 to 522 (PAPILSHSEP…RRYQCIFCLE (224 aa)) is interaction with CBFA2T3. The span at 313 to 322 (GDVHFPREDE) shows a compositional bias: basic and acidic residues. A C2H2-type 1 zinc finger spans residues 341-363 (YNCSCCSKSFDSSTLLGAHMQLH). The C2H2-type 2; degenerate zinc-finger motif lies at 370–394 (FVCKYCNKQFTTLNRLDRHEQICMR). 3 consecutive C2H2-type zinc fingers follow at residues 459–481 (YSCV…ANVH), 487–509 (YPCH…EIWH), and 515–538 (YQCI…KSFH). Residues Lys-549 and Lys-556 each participate in a glycyl lysine isopeptide (Lys-Gly) (interchain with G-Cter in SUMO2) cross-link. Polar residues-rich tracts occupy residues 581–598 (RNSS…NESP), 607–628 (LPSS…TSSP), 635–644 (PSWQGTPTSA), and 731–741 (SNHQSPSQPVA). Disordered stretches follow at residues 581-644 (RNSS…PTSA) and 731-776 (SNHQ…VPCN). Residues 747–757 (KDSKPEADKAS) are compositionally biased toward basic and acidic residues. Glycyl lysine isopeptide (Lys-Gly) (interchain with G-Cter in SUMO2) cross-links involve residues Lys-750, Lys-755, Lys-796, Lys-806, Lys-813, Lys-834, Lys-842, and Lys-849. Disordered stretches follow at residues 857–882 (KPKY…SPLG) and 895–914 (FDEV…YYNY). Positions 866 to 877 (TLPRESDPETRG) are enriched in basic and acidic residues. Residues Lys-915, Lys-971, Lys-976, Lys-984, Lys-988, Lys-998, Lys-1024, and Lys-1033 each participate in a glycyl lysine isopeptide (Lys-Gly) (interchain with G-Cter in SUMO2) cross-link. 5 C2H2-type zinc fingers span residues 1017 to 1039 (YICE…MRCH), 1045 to 1067 (YQCK…ERIH), 1073 to 1095 (FICQ…ERIH), 1101 to 1123 (YHCQ…ERRH), and 1132 to 1154 (FACF…QKKH). Glycyl lysine isopeptide (Lys-Gly) (interchain with G-Cter in SUMO2) cross-links involve residues Lys-1116, Lys-1139, Lys-1142, Lys-1157, and Lys-1190. Residues 1172–1203 (NSDLLESQPCTDSEDSDQKDDIKKPLLKMSFE) are disordered.

In terms of assembly, interacts with CBFA2T3, ZBTB4 and RBBP6. In terms of processing, ubiquitinated by RBBP6; leading to its degradation by the proteasome. In terms of tissue distribution, widely expressed throughout the adult brain where it is found mainly in neurons. Also expressed in the adrenal medulla. Not detected in non-neural tissues including heart, spleen, liver and muscle. In the embryo, expressed in the developing brain and spinal cord but not in the migratory neural crest. Also expressed in the limbs, transiently in somites, and in the embryonic liver. In the embryonic neural tube, expression is restricted to late postmitotic neurons.

It is found in the nucleus. It localises to the chromosome. Functionally, transcriptional regulator with bimodal DNA-binding specificity. Binds with a higher affinity to methylated CpG dinucleotides in the consensus sequence 5'-CGCG-3' but can also bind to E-box elements (5'-CACGTG-3'). Can also bind specifically to a single methyl-CpG pair. Represses transcription in a methyl-CpG-dependent manner. Plays an important role in regulating DNA-replication and common fragile sites (CFS) stability in a RBBP6- and MCM10-dependent manner; represses expression of MCM10 which plays an important role in DNA-replication. Acts as a transcriptional activator. May be involved in the differentiation and/or survival of late postmitotic neurons. This Rattus norvegicus (Rat) protein is Zinc finger and BTB domain-containing protein 38.